A 71-amino-acid chain; its full sequence is uncharacterized protein (71 aa).

Residues 1–10 show a composition bias toward basic residues; that stretch reads MHRKKRKKEK. Residues 1-20 form a disordered region; it reads MHRKKRKKEKKRTEKDNTTN. Residues 21–43 form a helical membrane-spanning segment; that stretch reads LPPLFLFPCSLSLPTLLAPVHYI.

The protein resides in the membrane. This is an uncharacterized protein from Saccharomyces cerevisiae (strain ATCC 204508 / S288c) (Baker's yeast).